Here is a 288-residue protein sequence, read N- to C-terminus: Elongation factor Ts (288 aa).

An involved in Mg(2+) ion dislocation from EF-Tu region spans residues 80–83 (TDFL).

Belongs to the EF-Ts family.

It localises to the cytoplasm. In terms of biological role, associates with the EF-Tu.GDP complex and induces the exchange of GDP to GTP. It remains bound to the aminoacyl-tRNA.EF-Tu.GTP complex up to the GTP hydrolysis stage on the ribosome. The protein is Elongation factor Ts of Pseudomonas fluorescens (strain ATCC BAA-477 / NRRL B-23932 / Pf-5).